The following is a 47-amino-acid chain: Thionin (47 aa).

4 disulfides stabilise this stretch: Cys3/Cys41, Cys4/Cys33, Cys12/Cys31, and Cys16/Cys27.

This sequence belongs to the plant thionin (TC 1.C.44) family. 4 C-C subfamily.

The protein localises to the secreted. Its function is as follows. Thionins are small plant proteins which are toxic to animal cells. They seem to exert their toxic effect at the level of the cell membrane. Their precise function is not known. The sequence is that of Thionin (THI1) from Pyrularia pubera (Buffalo nut).